The sequence spans 115 residues: UPF0738 protein SACOL1009 (115 aa).

This sequence belongs to the UPF0738 family.

The polypeptide is UPF0738 protein SACOL1009 (Staphylococcus aureus (strain COL)).